Here is a 475-residue protein sequence, read N- to C-terminus: tRNA modification GTPase MnmE (475 aa).

Residues R32, E97, and K136 each contribute to the (6S)-5-formyl-5,6,7,8-tetrahydrofolate site. The region spanning 232–396 (GVATVIAGRP…LKSRMSSMVE (165 aa)) is the TrmE-type G domain. GTP-binding positions include 242–247 (NAGKST), 261–267 (SHMPGTT), 286–289 (DTAG), and 377–379 (SAR). Residues S246 and T267 each contribute to the Mg(2+) site. K475 lines the (6S)-5-formyl-5,6,7,8-tetrahydrofolate pocket.

It belongs to the TRAFAC class TrmE-Era-EngA-EngB-Septin-like GTPase superfamily. TrmE GTPase family. In terms of assembly, homodimer. Heterotetramer of two MnmE and two MnmG subunits. It depends on K(+) as a cofactor.

It is found in the cytoplasm. Functionally, exhibits a very high intrinsic GTPase hydrolysis rate. Involved in the addition of a carboxymethylaminomethyl (cmnm) group at the wobble position (U34) of certain tRNAs, forming tRNA-cmnm(5)s(2)U34. The chain is tRNA modification GTPase MnmE from Chlorobium phaeobacteroides (strain DSM 266 / SMG 266 / 2430).